We begin with the raw amino-acid sequence, 337 residues long: MIEADRLVHAQPQGTEERDEQIDRAMRPKLLDEYTGQDDTRAQLKVFIEAAQKRGEALDHMLIYGPPGLGKTTLAMIVANEMGVNIKSTSGPVLEKAGDLAALLTNLEAGDVLFIDEIHRLSPVVEEILYPAMEDYQLDIMIGEGPAARSIKLELPPFTLIGATTRAGALTSPLRARFGIPLRLEFYNVKDLSSIVTRSAKVLELPIDQEGAVEVARRSRGTPRIANRLLRRVRDYAEVKHDGEVNKVVAESALDMLDVDVEGFDYMDRKLLLAIIDKFMGGPVGLDNLAAAIGEERETIEDVLEPFLIQQGFIQRTPRGRIATARAYQHFNLIQPE.

The interval 1–27 (MIEADRLVHAQPQGTEERDEQIDRAMR) is disordered. Residues 4–187 (ADRLVHAQPQ…FGIPLRLEFY (184 aa)) form a large ATPase domain (RuvB-L) region. ATP-binding positions include Arg27, Gly68, Lys71, Thr72, Thr73, 134–136 (EDY), Arg177, Tyr187, and Arg224. Thr72 serves as a coordination point for Mg(2+). Residues 188–258 (NVKDLSSIVT…VAESALDMLD (71 aa)) form a small ATPAse domain (RuvB-S) region. The head domain (RuvB-H) stretch occupies residues 261–337 (VEGFDYMDRK…YQHFNLIQPE (77 aa)). DNA-binding residues include Arg297, Arg316, and Arg321.

Belongs to the RuvB family. In terms of assembly, homohexamer. Forms an RuvA(8)-RuvB(12)-Holliday junction (HJ) complex. HJ DNA is sandwiched between 2 RuvA tetramers; dsDNA enters through RuvA and exits via RuvB. An RuvB hexamer assembles on each DNA strand where it exits the tetramer. Each RuvB hexamer is contacted by two RuvA subunits (via domain III) on 2 adjacent RuvB subunits; this complex drives branch migration. In the full resolvosome a probable DNA-RuvA(4)-RuvB(12)-RuvC(2) complex forms which resolves the HJ.

The protein resides in the cytoplasm. It carries out the reaction ATP + H2O = ADP + phosphate + H(+). Functionally, the RuvA-RuvB-RuvC complex processes Holliday junction (HJ) DNA during genetic recombination and DNA repair, while the RuvA-RuvB complex plays an important role in the rescue of blocked DNA replication forks via replication fork reversal (RFR). RuvA specifically binds to HJ cruciform DNA, conferring on it an open structure. The RuvB hexamer acts as an ATP-dependent pump, pulling dsDNA into and through the RuvAB complex. RuvB forms 2 homohexamers on either side of HJ DNA bound by 1 or 2 RuvA tetramers; 4 subunits per hexamer contact DNA at a time. Coordinated motions by a converter formed by DNA-disengaged RuvB subunits stimulates ATP hydrolysis and nucleotide exchange. Immobilization of the converter enables RuvB to convert the ATP-contained energy into a lever motion, pulling 2 nucleotides of DNA out of the RuvA tetramer per ATP hydrolyzed, thus driving DNA branch migration. The RuvB motors rotate together with the DNA substrate, which together with the progressing nucleotide cycle form the mechanistic basis for DNA recombination by continuous HJ branch migration. Branch migration allows RuvC to scan DNA until it finds its consensus sequence, where it cleaves and resolves cruciform DNA. The sequence is that of Holliday junction branch migration complex subunit RuvB from Shewanella loihica (strain ATCC BAA-1088 / PV-4).